Here is a 176-residue protein sequence, read N- to C-terminus: Flavodoxin 1 (176 aa).

Residues 4–165 (TGIFFGSDTG…RVEKWVKQIS (162 aa)) form the Flavodoxin-like domain.

It belongs to the flavodoxin family. It depends on FMN as a cofactor.

Its function is as follows. Low-potential electron donor to a number of redox enzymes (Potential). Involved in the reactivation of inactive cob(II)alamin in methionine synthase. In Escherichia coli O157:H7, this protein is Flavodoxin 1 (fldA).